A 464-amino-acid polypeptide reads, in one-letter code: Mitogen-activated protein kinase 10 (464 aa).

Residues 64 to 359 (YQNLKPIGSG…VDDALQHPYI (296 aa)) enclose the Protein kinase domain. ATP-binding positions include 70–78 (IGSGAQGIV) and K93. The active-site Proton acceptor is D189. T221 carries the phosphothreonine; by MAP2K7 modification. Positions 221 to 223 (TPY) match the TXY motif. A Phosphotyrosine; by MAP2K4 modification is found at Y223. The tract at residues 405-464 (TKNGVVKGQPSPSGAAVNSSESLPPSSSVNDISSMSTDQTLASDTDSSLEASAGPLGCCR) is disordered. Low complexity predominate over residues 423 to 432 (SSESLPPSSS). A compositionally biased stretch (polar residues) spans 433-454 (VNDISSMSTDQTLASDTDSSLE). 2 S-palmitoyl cysteine lipidation sites follow: C462 and C463.

This sequence belongs to the protein kinase superfamily. CMGC Ser/Thr protein kinase family. MAP kinase subfamily. Interacts with MAPKBP1. Interacts with MAPK8IP1/JIP-1 and MAPK8IP3/JIP-3/JSAP1. Interacts with SPAG9/MAPK8IP4/JIP4. Interacts with HDAC9. Interacts with ARRB2; the interaction enhances MAPK10 activation by MAP3K5. Interacts with SARM1. Interacts with JUND; interaction is inhibited in the presence of MEN1. It depends on Mg(2+) as a cofactor. Post-translationally, dually phosphorylated on Thr-221 and Tyr-223 by MAP2K4 and MAP2K7, which activates the enzyme. MAP2K7 shows a strong preference for Thr-221 while MAP2K4 phosphorylates Tyr-223 preferentially. Weakly autophosphorylated on threonine and tyrosine residues in vitro. In terms of processing, palmitoylation regulates subcellular location and axonal development. Specific to a subset of neurons in the nervous system. Present in the hippocampus and areas, cerebellum, striatum, brain stem, and weakly in the spinal cord. Very weak expression in testis and kidney.

The protein localises to the cytoplasm. It is found in the membrane. Its subcellular location is the nucleus. It localises to the mitochondrion. The catalysed reaction is L-seryl-[protein] + ATP = O-phospho-L-seryl-[protein] + ADP + H(+). It carries out the reaction L-threonyl-[protein] + ATP = O-phospho-L-threonyl-[protein] + ADP + H(+). Its activity is regulated as follows. Activated by threonine and tyrosine phosphorylation by two dual specificity kinases, MAP2K4 and MAP2K7. MAP2K7 phosphorylates MAPK10 on Thr-221 causing a conformational change and a large increase in Vmax. MAP2K4 then phosphorylates Tyr-223 resulting in a further increase in Vmax. Inhibited by dual specificity phosphatases, such as DUSP1. Inhibited by HDAC9. Serine/threonine-protein kinase involved in various processes such as neuronal proliferation, differentiation, migration and programmed cell death. Extracellular stimuli such as pro-inflammatory cytokines or physical stress stimulate the stress-activated protein kinase/c-Jun N-terminal kinase (SAP/JNK) signaling pathway. In this cascade, two dual specificity kinases MAP2K4/MKK4 and MAP2K7/MKK7 phosphorylate and activate MAPK10/JNK3. In turn, MAPK10/JNK3 phosphorylates a number of transcription factors, primarily components of AP-1 such as JUN and ATF2 and thus regulates AP-1 transcriptional activity. Plays regulatory roles in the signaling pathways during neuronal apoptosis. Phosphorylates the neuronal microtubule regulator STMN2. Acts in the regulation of the amyloid-beta precursor protein/APP signaling during neuronal differentiation by phosphorylating APP. Also participates in neurite growth in spiral ganglion neurons. Phosphorylates the CLOCK-BMAL1 heterodimer and plays a role in the photic regulation of the circadian clock. Phosphorylates JUND and this phosphorylation is inhibited in the presence of MEN1. In Homo sapiens (Human), this protein is Mitogen-activated protein kinase 10 (MAPK10).